The following is a 48-amino-acid chain: Large ribosomal subunit protein bL34c (48 aa).

The protein belongs to the bacterial ribosomal protein bL34 family.

Its subcellular location is the plastid. It localises to the chloroplast. This chain is Large ribosomal subunit protein bL34c, found in Thalassiosira pseudonana (Marine diatom).